The sequence spans 92 residues: Small ribosomal subunit protein bS18 (92 aa).

The tract at residues 1–28 (MTQQGNSGERKPRGKGPKRPRKPKVDPF) is disordered. Residues 12–22 (PRGKGPKRPRK) show a composition bias toward basic residues.

This sequence belongs to the bacterial ribosomal protein bS18 family. As to quaternary structure, part of the 30S ribosomal subunit. Forms a tight heterodimer with protein bS6.

Binds as a heterodimer with protein bS6 to the central domain of the 16S rRNA, where it helps stabilize the platform of the 30S subunit. This chain is Small ribosomal subunit protein bS18, found in Deinococcus radiodurans (strain ATCC 13939 / DSM 20539 / JCM 16871 / CCUG 27074 / LMG 4051 / NBRC 15346 / NCIMB 9279 / VKM B-1422 / R1).